A 281-amino-acid polypeptide reads, in one-letter code: NAD-dependent protein deacetylase 1 (281 aa).

Residues 1–281 (MEEGAALEGV…FDQILDALDL (281 aa)) form the Deacetylase sirtuin-type domain. NAD(+) contacts are provided by residues 24–44 (GAGV…GSLN) and 102–105 (QNVD). The active-site Proton acceptor is His-120. Residues Cys-128, Cys-131, Cys-183, and Cys-186 each coordinate Zn(2+). NAD(+) contacts are provided by residues 224–226 (GSS), 250–252 (NGG), and Val-268.

Belongs to the sirtuin family. Class II subfamily. It depends on Zn(2+) as a cofactor.

Its subcellular location is the cytoplasm. It catalyses the reaction N(6)-acetyl-L-lysyl-[protein] + NAD(+) + H2O = 2''-O-acetyl-ADP-D-ribose + nicotinamide + L-lysyl-[protein]. In terms of biological role, NAD-dependent protein deacetylase which modulates the activities of several enzymes which are inactive in their acetylated form. The polypeptide is NAD-dependent protein deacetylase 1 (Corynebacterium efficiens (strain DSM 44549 / YS-314 / AJ 12310 / JCM 11189 / NBRC 100395)).